We begin with the raw amino-acid sequence, 120 residues long: Neuromedin-B (120 aa).

The N-terminal stretch at 1 to 29 (MSAVPLTRMLPLRFLTHLLLLSFIPLYFC) is a signal peptide. Residues 30 to 44 (MEFSEDARNIEKIRR) constitute a propeptide that is removed on maturation. Methionine amide is present on Met54. Residues 58 to 120 (SLQDTYNPSE…MDDYIKTTQK (63 aa)) constitute a propeptide that is removed on maturation.

This sequence belongs to the bombesin/neuromedin-B/ranatensin family. In terms of tissue distribution, brain, intestine, and ovaries and early embryos (stages 2 and 10).

The protein localises to the secreted. Its function is as follows. Stimulates smooth muscle contraction. In Xenopus laevis (African clawed frog), this protein is Neuromedin-B (nmb).